Here is a 214-residue protein sequence, read N- to C-terminus: Calcineurin B homologous protein 3 (214 aa).

G2 is lipidated: N-myristoyl glycine. The EF-hand domain occupies 110 to 145; that stretch reads CRKDKLRFLFNMYDTDNDSKITLEEYRKVVEELLSG. Residues D123, D125, D127, K129, and E134 each coordinate Ca(2+).

Belongs to the calcineurin regulatory subunit family. CHP subfamily. In terms of assembly, monomer. Homodimer.

The protein localises to the nucleus. Its subcellular location is the cytoplasm. The protein resides in the membrane. It localises to the cell membrane. It is found in the cell projection. The protein localises to the lamellipodium. Its subcellular location is the ruffle membrane. Functionally, functions as an integral cofactor in cell pH regulation by controlling plasma membrane-type Na(+)/H(+) exchange activity. Promotes the induction of hematopoietic stem cell differentiation toward megakaryocytic lineage. Essential for the coupling of ERK cascade activation with the expression of ETS family genes in megakaryocytic differentiation. Also involved in granulocytic differentiation in a ERK-dependent manner. Inhibits the phosphatase activity of calcineurin. The polypeptide is Calcineurin B homologous protein 3 (tesc) (Xenopus tropicalis (Western clawed frog)).